The chain runs to 846 residues: Iron-sulfur cluster assembly SufBD family protein Mb1496 (846 aa).

Residues 1 to 20 (MTLTPEASKSVAQPPTQAPL) are disordered. Residues 388-528 (LAGYYLAEGH…LQSILARLGH (141 aa)) form the DOD-type homing endonuclease domain.

This sequence belongs to the iron-sulfur cluster assembly SufBD family. Post-translationally, this protein undergoes a protein self splicing that involves a post-translational excision of the intervening region (intein) followed by peptide ligation.

The chain is Iron-sulfur cluster assembly SufBD family protein Mb1496 from Mycobacterium bovis (strain ATCC BAA-935 / AF2122/97).